Consider the following 245-residue polypeptide: 1-(5-phosphoribosyl)-5-[(5-phosphoribosylamino)methylideneamino] imidazole-4-carboxamide isomerase (245 aa).

Asp-7 (proton acceptor) is an active-site residue. The Proton donor role is filled by Asp-129.

The protein belongs to the HisA/HisF family.

The protein localises to the cytoplasm. The enzyme catalyses 1-(5-phospho-beta-D-ribosyl)-5-[(5-phospho-beta-D-ribosylamino)methylideneamino]imidazole-4-carboxamide = 5-[(5-phospho-1-deoxy-D-ribulos-1-ylimino)methylamino]-1-(5-phospho-beta-D-ribosyl)imidazole-4-carboxamide. Its pathway is amino-acid biosynthesis; L-histidine biosynthesis; L-histidine from 5-phospho-alpha-D-ribose 1-diphosphate: step 4/9. The polypeptide is 1-(5-phosphoribosyl)-5-[(5-phosphoribosylamino)methylideneamino] imidazole-4-carboxamide isomerase (Shigella boydii serotype 18 (strain CDC 3083-94 / BS512)).